The sequence spans 562 residues: TBC1 domain family member 24 (562 aa).

Residues Lys-36, Arg-40, Lys-238, Arg-242, and 293-297 (RLFSR) each bind a 1,2-diacyl-sn-glycero-3-phospho-(1D-myo-inositol). One can recognise a Rab-GAP TBC domain in the interval 42–259 (GHWAKSHSLR…FFHKVRGGQP (218 aa)). A TLDc domain is found at 337–549 (EIVSVKEMRD…ISIIEVWGFK (213 aa)). Residues 451–464 (ASSGDNDANSSQSA) show a composition bias toward low complexity. Residues 451–471 (ASSGDNDANSSQSAKDGIDPS) form a disordered region.

In terms of assembly, interacts with ARF6.

It localises to the cell membrane. Its subcellular location is the cytoplasm. The protein localises to the cytoplasmic vesicle membrane. It is found in the presynapse. May act as a GTPase-activating protein for Rab family protein(s). Involved in neuronal projections development, probably through a negative modulation of ARF6 function. Involved in the regulation of synaptic vesicle trafficking. The polypeptide is TBC1 domain family member 24 (tbc1d24) (Xenopus tropicalis (Western clawed frog)).